A 153-amino-acid chain; its full sequence is D-aminoacyl-tRNA deacylase (153 aa).

The Gly-cisPro motif, important for rejection of L-amino acids motif lies at 137–138; it reads GP.

The protein belongs to the DTD family. In terms of assembly, homodimer.

It is found in the cytoplasm. The enzyme catalyses glycyl-tRNA(Ala) + H2O = tRNA(Ala) + glycine + H(+). The catalysed reaction is a D-aminoacyl-tRNA + H2O = a tRNA + a D-alpha-amino acid + H(+). Functionally, an aminoacyl-tRNA editing enzyme that deacylates mischarged D-aminoacyl-tRNAs. Also deacylates mischarged glycyl-tRNA(Ala), protecting cells against glycine mischarging by AlaRS. Acts via tRNA-based rather than protein-based catalysis; rejects L-amino acids rather than detecting D-amino acids in the active site. By recycling D-aminoacyl-tRNA to D-amino acids and free tRNA molecules, this enzyme counteracts the toxicity associated with the formation of D-aminoacyl-tRNA entities in vivo and helps enforce protein L-homochirality. This chain is D-aminoacyl-tRNA deacylase, found in Dehalococcoides mccartyi (strain ATCC BAA-2100 / JCM 16839 / KCTC 5957 / BAV1).